A 63-amino-acid chain; its full sequence is Large ribosomal subunit protein bL28 (63 aa).

It belongs to the bacterial ribosomal protein bL28 family.

The protein is Large ribosomal subunit protein bL28 of Brachyspira hyodysenteriae (strain ATCC 49526 / WA1).